The chain runs to 363 residues: Crh-like protein 3 (363 aa).

The first 19 residues, 1–19, serve as a signal peptide directing secretion; the sequence is MSLLYLVALFVASICSVTA. A disulfide bond links cysteine 25 and cysteine 32. The region spanning 26 to 237 is the GH16 domain; sequence NPLTTTCPPD…YSKAPFTMVL (212 aa). N-linked (GlcNAc...) asparagine glycosylation is found at asparagine 41, asparagine 47, and asparagine 56. Residue glutamate 118 is the Nucleophile of the active site. Glutamate 122 acts as the Proton donor in catalysis. Glutamate 122 contacts chitin. 3 N-linked (GlcNAc...) asparagine glycosylation sites follow: asparagine 127, asparagine 141, and asparagine 161. Chitin is bound by residues arginine 203, tryptophan 207, and threonine 218. 2 N-linked (GlcNAc...) asparagine glycosylation sites follow: asparagine 252 and asparagine 269. Residues 298–318 traverse the membrane as a helical segment; it reads VYIGAGCVGAALLAGFIFFFI.

This sequence belongs to the glycosyl hydrolase 16 family. CRH1 subfamily. The GPI-like anchor contains a phosphoceramide lipid group. The anchor position has not been determined.

The protein resides in the cell membrane. The protein localises to the secreted. It is found in the cell wall. It carries out the reaction Random endo-hydrolysis of N-acetyl-beta-D-glucosaminide (1-&gt;4)-beta-linkages in chitin and chitodextrins.. Functionally, dual chitinase/transglycosylase that plays a role in cell wall architecture. Chitinase and transglycosylase activities are coupled. Required for the polysaccharide cross-linking at the septa and the cell wall. More specifically, transfers chitin to 1,6-beta-glucan in the cell wall. In Aspergillus fumigatus (strain ATCC MYA-4609 / CBS 101355 / FGSC A1100 / Af293) (Neosartorya fumigata), this protein is Crh-like protein 3.